The sequence spans 882 residues: MAVRSRRPWMSVALGLVLGFTAASWLIAPRVAELSERKRRGSSLCSYYGRSAAGPRAGAQQPLPQPQSRPRQEQSPPPARQDLQGPPLPEAAPGITSFRSSPWQQPPPLQQRRRGREPEGATGLPGAPAAEGEPEEEDGGAAGQRRDGRPGSSHNGSGDGGAAAPSARPRDFLYVGVMTAQKYLGSRALAAQRTWARFIPGRVEFFSSQQPPNAGQPPPPLPVIALPGVDDSYPPQKKSFMMIKYMHDHYLDKYEWFMRADDDVYIKGDKLEEFLRSLNSSKPLYLGQTGLGNIEELGKLGLEPGENFCMGGPGMIFSREVLRRMVPHIGECLREMYTTHEDVEVGRCVRRFGGTQCVWSYEMQQLFHENYEHNRKGYIQDLHNSKIHAAITLHPNKRPAYQYRLHNYMLSRKISELRYRTIQLHRESALMSKLSNTEVSKEDQQLGVIPSFNHFQPRERNEVIEWEFLTGKLLYSAAENQPPRQSLSSILRTALDDTVLQVMEMINENAKSRGRLIDFKEIQYGYRRVNPMHGVEYILDLLLLYKRHKGRKLTVPVRRHAYLQQLFSKPFFRETEELDVNSLVESINSETQSFSFISNSLKILSSFQGAKEMGGHNEKKVHILVPLIGRYDIFLRFMENFENMCLIPKQNVKLVIILFSRDSGQDSSKHIELIKGYQNKYPKAEMTLIPMKGEFSRGLGLEMASAQFDNDTLLLFCDVDLIFREDFLQRCRDNTIQGQQVYYPIIFSQYDPKVTNGGNPPTDDYFIFSKKTGFWRDYGYGITCIYKSDLLGAGGFDTSIQGWGLEDVDLYNKVILSGLRPFRSQEVGVVHIFHPVHCDPNLDPKQYKMCLGSKASTFASTMQLAELWLEKHLGVRYNRTLS.

Topologically, residues 1–7 (MAVRSRR) are cytoplasmic. A helical; Signal-anchor for type II membrane protein membrane pass occupies residues 8-28 (PWMSVALGLVLGFTAASWLIA). Over 29–882 (PRVAELSERK…LGVRYNRTLS (854 aa)) the chain is Lumenal. A disordered region spans residues 46 to 167 (SYYGRSAAGP…GDGGAAAPSA (122 aa)). Composition is skewed to low complexity over residues 59–69 (AQQPLPQPQSR) and 120–131 (GATGLPGAPAAE). Residues N155, N279, and N710 are each glycosylated (N-linked (GlcNAc...) asparagine). Positions 720 and 834 each coordinate a divalent metal cation. N878 carries N-linked (GlcNAc...) asparagine glycosylation.

It belongs to the chondroitin N-acetylgalactosaminyltransferase family. It depends on Co(2+) as a cofactor. Mn(2+) is required as a cofactor. Cd(2+) serves as cofactor. Detected at low levels in brain, cerebral cortex, uterus and small intestine.

The protein localises to the golgi apparatus. The protein resides in the golgi stack membrane. It carries out the reaction 3-O-(beta-D-GlcA-(1-&gt;3)-beta-D-GalNAc-(1-&gt;4)-beta-D-GlcA-(1-&gt;3)-beta-D-Gal-(1-&gt;3)-beta-D-Gal-(1-&gt;4)-beta-D-Xyl)-L-seryl-[protein] + UDP-N-acetyl-alpha-D-galactosamine = 3-O-(beta-D-GalNAc-(1-&gt;4)-beta-D-GlcA-(1-&gt;3)-beta-D-GalNAc-(1-&gt;4)-beta-D-GlcA-(1-&gt;3)-beta-D-Gal-(1-&gt;3)-beta-D-Gal-(1-&gt;4)-beta-D-Xyl)-L-seryl-[protein] + UDP + H(+). It catalyses the reaction 3-O-{beta-D-GlcA-(1-&gt;3)-[beta-D-GalNAc-(1-&gt;4)-beta-D-GlcA-(1-&gt;3)](n)-beta-D-GalNAc-(1-&gt;4)-beta-D-GlcA-(1-&gt;3)-beta-D-Gal-(1-&gt;3)-beta-D-Gal-(1-&gt;4)-beta-D-Xyl}-L-seryl-[protein] + UDP-N-acetyl-alpha-D-galactosamine = 3-O-{[beta-D-GalNAc-(1-&gt;4)-beta-D-GlcA-(1-&gt;3)](n+1)-beta-D-GalNAc-(1-&gt;4)-beta-D-GlcA-(1-&gt;3)-beta-D-Gal-(1-&gt;3)-beta-D-Gal-(1-&gt;4)-beta-D-Xyl}-L-seryl-[protein] + UDP + H(+). The enzyme catalyses 3-O-(beta-D-GalNAc-(1-&gt;4)-beta-D-GlcA-(1-&gt;3)-beta-D-Gal-(1-&gt;3)-beta-D-Gal-(1-&gt;4)-beta-D-Xyl)-L-seryl-[protein] + UDP-alpha-D-glucuronate = 3-O-(beta-D-GlcA-(1-&gt;3)-beta-D-GalNAc-(1-&gt;4)-beta-D-GlcA-(1-&gt;3)-beta-D-Gal-(1-&gt;3)-beta-D-Gal-(1-&gt;4)-beta-D-Xyl)-L-seryl-[protein] + UDP + H(+). The catalysed reaction is 3-O-{[beta-D-GalNAc-(1-&gt;4)-beta-D-GlcA-(1-&gt;3)](n)-beta-D-GalNAc-(1-&gt;4)-beta-D-GlcA-(1-&gt;3)-beta-D-Gal-(1-&gt;3)-beta-D-Gal-(1-&gt;4)-beta-D-Xyl}-L-seryl-[protein] + UDP-alpha-D-glucuronate = 3-O-{beta-D-GlcA-(1-&gt;3)-[beta-D-GalNAc-(1-&gt;4)-beta-D-GlcA-(1-&gt;3)](n)-beta-D-GalNAc-(1-&gt;4)-beta-D-GlcA-(1-&gt;3)-beta-D-Gal-(1-&gt;3)-beta-D-Gal-(1-&gt;4)-beta-D-Xyl}-L-seryl-[protein] + UDP + H(+). Has both beta-1,3-glucuronic acid and beta-1,4-N-acetylgalactosamine transferase activity. Transfers glucuronic acid (GlcUA) from UDP-GlcUA and N-acetylgalactosamine (GalNAc) from UDP-GalNAc to the non-reducing end of the elongating chondroitin polymer. Specific activity is much reduced compared to CHSY1. The chain is Chondroitin sulfate synthase 3 (CHSY3) from Homo sapiens (Human).